A 155-amino-acid chain; its full sequence is S-ribosylhomocysteine lyase (155 aa).

Positions 54, 58, and 122 each coordinate Fe cation.

This sequence belongs to the LuxS family. As to quaternary structure, homodimer. It depends on Fe cation as a cofactor.

It carries out the reaction S-(5-deoxy-D-ribos-5-yl)-L-homocysteine = (S)-4,5-dihydroxypentane-2,3-dione + L-homocysteine. In terms of biological role, involved in the synthesis of autoinducer 2 (AI-2) which is secreted by bacteria and is used to communicate both the cell density and the metabolic potential of the environment. The regulation of gene expression in response to changes in cell density is called quorum sensing. Catalyzes the transformation of S-ribosylhomocysteine (RHC) to homocysteine (HC) and 4,5-dihydroxy-2,3-pentadione (DPD). This Deinococcus geothermalis (strain DSM 11300 / CIP 105573 / AG-3a) protein is S-ribosylhomocysteine lyase.